A 269-amino-acid chain; its full sequence is Formamidopyrimidine-DNA glycosylase (269 aa).

Catalysis depends on Pro2, which acts as the Schiff-base intermediate with DNA. The Proton donor role is filled by Glu3. Lys57 functions as the Proton donor; for beta-elimination activity in the catalytic mechanism. Positions 90, 109, and 150 each coordinate DNA. An FPG-type zinc finger spans residues 235–269 (QVYGRKGEPCRVCGTPIVATKHAQRATFYCRQCQK). Arg259 (proton donor; for delta-elimination activity) is an active-site residue.

The protein belongs to the FPG family. Monomer. Zn(2+) serves as cofactor.

It carries out the reaction Hydrolysis of DNA containing ring-opened 7-methylguanine residues, releasing 2,6-diamino-4-hydroxy-5-(N-methyl)formamidopyrimidine.. The enzyme catalyses 2'-deoxyribonucleotide-(2'-deoxyribose 5'-phosphate)-2'-deoxyribonucleotide-DNA = a 3'-end 2'-deoxyribonucleotide-(2,3-dehydro-2,3-deoxyribose 5'-phosphate)-DNA + a 5'-end 5'-phospho-2'-deoxyribonucleoside-DNA + H(+). Its function is as follows. Involved in base excision repair of DNA damaged by oxidation or by mutagenic agents. Acts as a DNA glycosylase that recognizes and removes damaged bases. Has a preference for oxidized purines, such as 7,8-dihydro-8-oxoguanine (8-oxoG). Has AP (apurinic/apyrimidinic) lyase activity and introduces nicks in the DNA strand. Cleaves the DNA backbone by beta-delta elimination to generate a single-strand break at the site of the removed base with both 3'- and 5'-phosphates. The polypeptide is Formamidopyrimidine-DNA glycosylase (Escherichia coli O6:H1 (strain CFT073 / ATCC 700928 / UPEC)).